The following is a 698-amino-acid chain: UvrABC system protein B (698 aa).

One can recognise a Helicase ATP-binding domain in the interval 35–210; it reads ARLQAGEKDI…TFRVRGDTVE (176 aa). 48–55 serves as a coordination point for ATP; that stretch reads GATGTGKS. The short motif at 101-124 is the Beta-hairpin element; sequence YYDYYQPEAYVPSSDTYIEKDSSI. The 167-residue stretch at 438 to 604 folds into the Helicase C-terminal domain; it reads QIDDLLAEIN…PLRKRIGDIT (167 aa). A UVR domain is found at 654 to 689; sequence AELIQELTDQMHVAAGELQFEVAARLRDEISDLKKE.

This sequence belongs to the UvrB family. Forms a heterotetramer with UvrA during the search for lesions. Interacts with UvrC in an incision complex.

Its subcellular location is the cytoplasm. Functionally, the UvrABC repair system catalyzes the recognition and processing of DNA lesions. A damage recognition complex composed of 2 UvrA and 2 UvrB subunits scans DNA for abnormalities. Upon binding of the UvrA(2)B(2) complex to a putative damaged site, the DNA wraps around one UvrB monomer. DNA wrap is dependent on ATP binding by UvrB and probably causes local melting of the DNA helix, facilitating insertion of UvrB beta-hairpin between the DNA strands. Then UvrB probes one DNA strand for the presence of a lesion. If a lesion is found the UvrA subunits dissociate and the UvrB-DNA preincision complex is formed. This complex is subsequently bound by UvrC and the second UvrB is released. If no lesion is found, the DNA wraps around the other UvrB subunit that will check the other stand for damage. The chain is UvrABC system protein B from Beutenbergia cavernae (strain ATCC BAA-8 / DSM 12333 / CCUG 43141 / JCM 11478 / NBRC 16432 / NCIMB 13614 / HKI 0122).